A 146-amino-acid chain; its full sequence is MTKKIEEKIEGVIESLGYLLYDVSLIKENEQHVLRVSLKNPNGAVSLDICQQVSEIISPLLDVCDFIQDAYILEVSSMGLERTLKTPKHFKLSLGEKVEVKLTNKESFQAVLKDANDLSADFELEDHAIKSVEYKDLKKVKTLFEW.

It belongs to the RimP family.

The protein resides in the cytoplasm. Functionally, required for maturation of 30S ribosomal subunits. The polypeptide is Ribosome maturation factor RimP (Helicobacter pylori (strain Shi470)).